Here is a 483-residue protein sequence, read N- to C-terminus: Probable pectate lyase 12 (483 aa).

The signal sequence occupies residues 1-24 (MMLQRSCIVLFFSLFLLVPQMVFS). N-linked (GlcNAc...) asparagine glycosylation is found at Asn27 and Asn50. Positions 220, 244, and 248 each coordinate Ca(2+). Residue Arg300 is part of the active site.

The protein belongs to the polysaccharide lyase 1 family. Ca(2+) serves as cofactor.

The enzyme catalyses Eliminative cleavage of (1-&gt;4)-alpha-D-galacturonan to give oligosaccharides with 4-deoxy-alpha-D-galact-4-enuronosyl groups at their non-reducing ends.. It participates in glycan metabolism; pectin degradation; 2-dehydro-3-deoxy-D-gluconate from pectin: step 2/5. In Arabidopsis thaliana (Mouse-ear cress), this protein is Probable pectate lyase 12.